The chain runs to 188 residues: MGFYALLLIALGMSMDAFAVALAKGAAVRMPPRKIAATALVFGTVEALTPLAGWVGGFYAKPFISEWDHWVAFVLLGGLGLKMMREGLSGEAEDVRESKRESLWMTVLTAFGTSIDSMIVGVGLAFMEVNIAFAAAIIGMATTVMVAVGLTAGRALGVLFGRCAEFAGGLVLIAIGTWTLLSHLGLIQ.

6 consecutive transmembrane segments (helical) span residues 3–23 (FYAL…VALA), 35–55 (IAAT…AGWV), 63–83 (FISE…GLKM), 104–126 (WMTV…GLAF), 140–160 (MATT…GVLF), and 167–187 (AGGL…LGLI).

This sequence belongs to the MntP (TC 9.B.29) family.

The protein localises to the cell inner membrane. Functionally, probably functions as a manganese efflux pump. This Neisseria meningitidis serogroup B (strain ATCC BAA-335 / MC58) protein is Putative manganese efflux pump MntP.